Here is a 205-residue protein sequence, read N- to C-terminus: Holliday junction branch migration complex subunit RuvA (205 aa).

The segment at 1–64 (MIGRLRGTLA…EDAHLLYGFA (64 aa)) is domain I. The domain II stretch occupies residues 65–143 (EKRERELFRE…AWETSPAMFT (79 aa)). A flexible linker region spans residues 144–154 (LVSDGPLPVAS). Residues 154-205 (SESSAEADAVSALVSLGYKPQEASKAIAAIKDKAGLSSEELIRRSLKGMIAK) form a domain III region.

The protein belongs to the RuvA family. Homotetramer. Forms an RuvA(8)-RuvB(12)-Holliday junction (HJ) complex. HJ DNA is sandwiched between 2 RuvA tetramers; dsDNA enters through RuvA and exits via RuvB. An RuvB hexamer assembles on each DNA strand where it exits the tetramer. Each RuvB hexamer is contacted by two RuvA subunits (via domain III) on 2 adjacent RuvB subunits; this complex drives branch migration. In the full resolvosome a probable DNA-RuvA(4)-RuvB(12)-RuvC(2) complex forms which resolves the HJ.

The protein resides in the cytoplasm. The RuvA-RuvB-RuvC complex processes Holliday junction (HJ) DNA during genetic recombination and DNA repair, while the RuvA-RuvB complex plays an important role in the rescue of blocked DNA replication forks via replication fork reversal (RFR). RuvA specifically binds to HJ cruciform DNA, conferring on it an open structure. The RuvB hexamer acts as an ATP-dependent pump, pulling dsDNA into and through the RuvAB complex. HJ branch migration allows RuvC to scan DNA until it finds its consensus sequence, where it cleaves and resolves the cruciform DNA. The chain is Holliday junction branch migration complex subunit RuvA from Pseudomonas entomophila (strain L48).